Consider the following 350-residue polypeptide: Atypical chemokine receptor 4 (350 aa).

Topologically, residues 1-41 (MAVEYNQSTDYYYEENEMNDTHDYSQYEVICIKEEVRKFAK) are extracellular. 2 N-linked (GlcNAc...) asparagine glycosylation sites follow: Asn6 and Asn19. Residues 42–66 (VFLPAFFTIAFIIGLAGNSTVVAIY) form a helical membrane-spanning segment. Over 67 to 79 (AYYKKRRTKTDVY) the chain is Cytoplasmic. Residues 80–99 (ILNLAVADLFLLFTLPFWAV) form a helical membrane-spanning segment. Residues 100 to 113 (NAVHGWVLGKIMCK) are Extracellular-facing. Residues Cys112 and Cys184 are joined by a disulfide bond. The helical transmembrane segment at 114-135 (VTSALYTVNFVSGMQFLACIST) threads the bilayer. Residues 136–153 (DRYWAVTKAPSQSGVGKP) are Cytoplasmic-facing. The chain crosses the membrane as a helical span at residues 154-175 (CWVICFCVWVAAILLSIPQLVF). The Extracellular portion of the chain corresponds to 176 to 199 (YTVNHKARCVPIFPYHLGTSMKAS). A helical transmembrane segment spans residues 200–222 (IQILEICIGFIIPFLIMAVCYFI). The Cytoplasmic portion of the chain corresponds to 223–241 (TAKTLIKMPNIKKSQPLKV). A helical membrane pass occupies residues 242-265 (LFTVVIVFIVTQLPYNIVKFCQAI). Topologically, residues 266–283 (DIIYSLITDCDMSKRMDV) are extracellular. A helical membrane pass occupies residues 284–306 (AIQITESIALFHSCLNPVLYVFM). Residues 307–350 (GTSFKNYIMKVAKKYGSWRRQRQNVEEIPFESEDATEPTSTFSI) are Cytoplasmic-facing.

This sequence belongs to the G-protein coupled receptor 1 family. Atypical chemokine receptor subfamily. As to quaternary structure, forms heteromers with CXCR3. Interacts with ARRB1 and ARRB2. The Ser/Thr residues in the C-terminal cytoplasmic tail may be phosphorylated. In terms of tissue distribution, expressed in circumvallate and fungiform papillae, olfactory epithelium and lung. Lower expression in liver, kidney and tongue epithelium bearing no taste papillae. Very low expression in the cerebral cortex of the brain.

It localises to the early endosome. It is found in the recycling endosome. The protein localises to the cell membrane. In terms of biological role, atypical chemokine receptor that controls chemokine levels and localization via high-affinity chemokine binding that is uncoupled from classic ligand-driven signal transduction cascades, resulting instead in chemokine sequestration, degradation, or transcytosis. Also known as interceptor (internalizing receptor) or chemokine-scavenging receptor or chemokine decoy receptor. Acts as a receptor for chemokines CCL2, CCL8, CCL13, CCL19, CCL21 and CCL25. Chemokine-binding does not activate G-protein-mediated signal transduction but instead induces beta-arrestin recruitment, leading to ligand internalization. Plays an important role in controlling the migration of immune and cancer cells that express chemokine receptors CCR7 and CCR9, by reducing the availability of CCL19, CCL21, and CCL25 through internalization. Negatively regulates CXCR3-induced chemotaxis. Regulates T-cell development in the thymus. This is Atypical chemokine receptor 4 (ACKR4) from Bos taurus (Bovine).